A 511-amino-acid chain; its full sequence is Lysine--tRNA ligase (511 aa).

Residues E421 and E428 each contribute to the Mg(2+) site.

This sequence belongs to the class-II aminoacyl-tRNA synthetase family. Homodimer. The cofactor is Mg(2+).

The protein resides in the cytoplasm. It carries out the reaction tRNA(Lys) + L-lysine + ATP = L-lysyl-tRNA(Lys) + AMP + diphosphate. This is Lysine--tRNA ligase from Aeromonas hydrophila subsp. hydrophila (strain ATCC 7966 / DSM 30187 / BCRC 13018 / CCUG 14551 / JCM 1027 / KCTC 2358 / NCIMB 9240 / NCTC 8049).